A 557-amino-acid polypeptide reads, in one-letter code: Dihydroxy-acid dehydratase (557 aa).

Position 78 (Asp78) interacts with Mg(2+). Cys119 is a binding site for [2Fe-2S] cluster. 2 residues coordinate Mg(2+): Asp120 and Lys121. Lys121 is modified (N6-carboxylysine). Cys191 is a [2Fe-2S] cluster binding site. Glu442 serves as a coordination point for Mg(2+). Residue Ser468 is the Proton acceptor of the active site.

The protein belongs to the IlvD/Edd family. As to quaternary structure, homodimer. Requires [2Fe-2S] cluster as cofactor. Mg(2+) is required as a cofactor.

The catalysed reaction is (2R)-2,3-dihydroxy-3-methylbutanoate = 3-methyl-2-oxobutanoate + H2O. It catalyses the reaction (2R,3R)-2,3-dihydroxy-3-methylpentanoate = (S)-3-methyl-2-oxopentanoate + H2O. It participates in amino-acid biosynthesis; L-isoleucine biosynthesis; L-isoleucine from 2-oxobutanoate: step 3/4. The protein operates within amino-acid biosynthesis; L-valine biosynthesis; L-valine from pyruvate: step 3/4. Functionally, functions in the biosynthesis of branched-chain amino acids. Catalyzes the dehydration of (2R,3R)-2,3-dihydroxy-3-methylpentanoate (2,3-dihydroxy-3-methylvalerate) into 2-oxo-3-methylpentanoate (2-oxo-3-methylvalerate) and of (2R)-2,3-dihydroxy-3-methylbutanoate (2,3-dihydroxyisovalerate) into 2-oxo-3-methylbutanoate (2-oxoisovalerate), the penultimate precursor to L-isoleucine and L-valine, respectively. The chain is Dihydroxy-acid dehydratase from Lachnoclostridium phytofermentans (strain ATCC 700394 / DSM 18823 / ISDg) (Clostridium phytofermentans).